The sequence spans 198 residues: Syndecan-4 (198 aa).

The N-terminal stretch at 1 to 23 is a signal peptide; the sequence is MAPACLLAPLLLLLLGGFPLVPG. At 24 to 145 the chain is on the extracellular side; sequence ESIRETEVID…QGSNIFERTE (122 aa). 2 disordered regions span residues 42–76 and 94–130; these read YFSG…PRPF and AQPG…NKVS. O-linked (Xyl...) (glycosaminoglycan) serine glycosylation is found at Ser-44, Ser-62, and Ser-64. Residues 48–71 are compositionally biased toward acidic residues; sequence PDDEDAGGSDDFELSGSGDLDDTE. A compositionally biased stretch (basic and acidic residues) spans 102–118; sequence SEPKELEENEVIPKRAP. The helical transmembrane segment at 146 to 170 threads the bilayer; it reads VLAALIVGGVVGILFAVFLILLLVY. The Cytoplasmic portion of the chain corresponds to 171-198; that stretch reads RMKKKDEGSYDLGKKPIYKKAPTNEFYA.

This sequence belongs to the syndecan proteoglycan family. In terms of assembly, homodimer. Interacts with CDCP1 and SDCBP. Interacts (via its cytoplasmic domain) with GIPC (via its PDZ domain). Interacts (via its cytoplasmic domain) with NUDT16L1. Interacts with DNM2; this interaction is markedly enhanced at focal ahesion site upon induction of focal adhesions and stress-fiber formation. Post-translationally, shedding is enhanced by a number of factors such as heparanase, thrombin or EGF. Also by stress and wound healing. PMA-mediated shedding is inhibited by TIMP3. O-glycosylated; contains both chondroitin sulfate and heparan sulfate. Ser-44, Ser-62 and Ser-64 can all be modified by either chondroitin sulfate or heparan sulfate, and the protein exists in forms that contain only chondroitin sulfate, only heparan sulfate and both chondroitin sulfate and heparan sulfate. Ubiquitous. Highest levels in liver, kidney and lung.

Its subcellular location is the membrane. It is found in the secreted. Functionally, cell surface proteoglycan which regulates exosome biogenesis in concert with SDCBP and PDCD6IP. This Mus musculus (Mouse) protein is Syndecan-4.